Consider the following 284-residue polypeptide: 2-dehydro-3-deoxyphosphooctonate aldolase (284 aa).

This sequence belongs to the KdsA family.

Its subcellular location is the cytoplasm. The catalysed reaction is D-arabinose 5-phosphate + phosphoenolpyruvate + H2O = 3-deoxy-alpha-D-manno-2-octulosonate-8-phosphate + phosphate. It functions in the pathway carbohydrate biosynthesis; 3-deoxy-D-manno-octulosonate biosynthesis; 3-deoxy-D-manno-octulosonate from D-ribulose 5-phosphate: step 2/3. The protein operates within bacterial outer membrane biogenesis; lipopolysaccharide biosynthesis. The sequence is that of 2-dehydro-3-deoxyphosphooctonate aldolase from Cronobacter sakazakii (strain ATCC BAA-894) (Enterobacter sakazakii).